The following is a 467-amino-acid chain: MAAAAAARAVPVSSGFRGLRRTLPLVVILGATGTGKSTLALQLGQRLGGEIVSADSMQVYEGLDIITNKVSAQEQKMCQHHMISFVDPLVTSYTVVDFRNKATALIEDIFARDKIPIVVGGTNYYIESLLWKVLITTKPQEMGTGKVVDRKVELEKEDGHELHKRLSQVDPEMAAKLHPHDKRKVARSLQVFEETGISHSEFLHRQHAEEGGGPLGGPLRFPNPCILWLHADQAVLDERLDKRVDDMLAAGLLEELRGFHRRYNLKNISENSQDYQHGIFQSIGFKEFHEYLTTEGKCTPETSNQLLKKGIEALKQVTKRYARKQNRWVKNRFLSRPGPSVPPVYGLEVSDVSKWEESVLEPALNIVQSFIQGHKPTAMPVKMAYNESENKRSYHMCDLCDRIIIGDREWAAHLKSKSHLHQLKKRRRLDLDAVSATGSQSNSPDCDPERIEGESSGQHNQELKASV.

Residues methionine 1–leucine 47 constitute a mitochondrion transit peptide. Residue threonine 32 to serine 37 participates in dimethylallyl diphosphate binding. Interaction with substrate tRNA regions lie at residues aspartate 55–glutamine 58 and arginine 183–arginine 187. The core aggregation region stretch occupies residues phenylalanine 221 to histidine 230. The interval glutamine 233 to glutamate 255 is interaction with isopentenylpyrophosphate transferase. Interaction with substrate tRNA regions lie at residues glutamine 281–isoleucine 283 and alanine 313–asparagine 331. The Matrin-type zinc finger occupies histidine 395 to lysine 425. Residues aspartate 432 to valine 467 are disordered. 2 positions are modified to phosphoserine: serine 443 and serine 455.

It belongs to the IPP transferase family.

It localises to the mitochondrion. It is found in the cytoplasm. Its subcellular location is the nucleus. It catalyses the reaction adenosine(37) in tRNA + dimethylallyl diphosphate = N(6)-dimethylallyladenosine(37) in tRNA + diphosphate. In terms of biological role, catalyzes the transfer of a dimethylallyl group onto the adenine at position 37 of both cytosolic and mitochondrial tRNAs, leading to the formation of N6-(dimethylallyl)adenosine (i6A37). Mediates modification of a limited subset of tRNAs: tRNA(Ser)(AGA), tRNA(Ser)(CGA), tRNA(Ser)(UGA), as well as partial modification of the selenocysteine tRNA(Ser)(UCA). TRIT1 is therefore required for selenoprotein expression. The chain is tRNA dimethylallyltransferase (Trit1) from Mus musculus (Mouse).